A 266-amino-acid polypeptide reads, in one-letter code: MGSSPQSSTRTLLGLLFLLLVQLSSALKFDLHASSGHNERCIRNFVFKDQLVVVTAIVSGQRGDGQVVNMHIKDALGNDHGRPKDIAGETRQAFTSVADTAFDVCFENKLVSHHGVANPYKSVELDVEIGADARDWSSVQAAEKLKPVETDLRRIEEMVAEIVNEMEYLRAREQKLRDTNESTNERVKWFAFGTMGMLVGLGVWQVVYLRAYFRYVDFPVSWRVDGVVANCCSCCEQVEASYLRSSRVVFWSPLVMWTRLSWLILR.

The N-terminal stretch at 1–26 (MGSSPQSSTRTLLGLLFLLLVQLSSA) is a signal peptide. Residues 27-188 (LKFDLHASSG…TNESTNERVK (162 aa)) are Lumenal-facing. The 91-residue stretch at 39–129 (ERCIRNFVFK…YKSVELDVEI (91 aa)) folds into the GOLD domain. Residues 189-209 (WFAFGTMGMLVGLGVWQVVYL) traverse the membrane as a helical segment. The Cytoplasmic portion of the chain corresponds to 210–266 (RAYFRYVDFPVSWRVDGVVANCCSCCEQVEASYLRSSRVVFWSPLVMWTRLSWLILR).

The protein belongs to the EMP24/GP25L family.

Its subcellular location is the endoplasmic reticulum membrane. It localises to the golgi apparatus membrane. Functionally, constituent of COPII-coated endoplasmic reticulum-derived transport vesicles. Required for efficient transport of a subset of secretory proteins to the Golgi. Facilitates retrograde transport from the Golgi to the endoplasmic reticulum. In Aspergillus fumigatus (strain ATCC MYA-4609 / CBS 101355 / FGSC A1100 / Af293) (Neosartorya fumigata), this protein is Endoplasmic reticulum vesicle protein 25 (erv25).